The chain runs to 121 residues: Large ribosomal subunit protein bL12 (121 aa).

Belongs to the bacterial ribosomal protein bL12 family. As to quaternary structure, homodimer. Part of the ribosomal stalk of the 50S ribosomal subunit. Forms a multimeric L10(L12)X complex, where L10 forms an elongated spine to which 2 to 4 L12 dimers bind in a sequential fashion. Binds GTP-bound translation factors.

Forms part of the ribosomal stalk which helps the ribosome interact with GTP-bound translation factors. Is thus essential for accurate translation. The protein is Large ribosomal subunit protein bL12 of Pseudomonas putida (strain GB-1).